A 30-amino-acid chain; its full sequence is Varv peptide G (30 aa).

A cross-link (cyclopeptide (Gly-Asn)) is located at residues 1–30; the sequence is GVPVCGETCFGGTCNTPGCSCDPWPVCSRN. 3 cysteine pairs are disulfide-bonded: C5-C19, C9-C21, and C14-C27.

In terms of processing, this is a cyclic peptide.

Its function is as follows. Probably participates in a plant defense mechanism. The protein is Varv peptide G of Viola arvensis (European field pansy).